A 117-amino-acid polypeptide reads, in one-letter code: Ribonuclease P protein component 4 (117 aa).

Cysteine 63, cysteine 66, cysteine 92, and cysteine 95 together coordinate Zn(2+).

This sequence belongs to the eukaryotic/archaeal RNase P protein component 4 family. In terms of assembly, consists of a catalytic RNA component and at least 4 protein subunits. Forms a subcomplex with Rnp1 which stimulates the catalytic RNA. Requires Zn(2+) as cofactor.

The protein resides in the cytoplasm. The enzyme catalyses Endonucleolytic cleavage of RNA, removing 5'-extranucleotides from tRNA precursor.. Functionally, part of ribonuclease P, a protein complex that generates mature tRNA molecules by cleaving their 5'-ends. The RNA is catalytic, but its KM for pre-tRNA is 170-fold decreased in the presence of the 4 known protein subunits (Rnp1-4). The protein subunits also decrease the amount of Mg(2+) needed for activity. The chain is Ribonuclease P protein component 4 from Pyrococcus furiosus (strain ATCC 43587 / DSM 3638 / JCM 8422 / Vc1).